A 23-amino-acid chain; its full sequence is Magainin-R1 (23 aa).

As to expression, expressed by the skin glands.

The protein resides in the secreted. In terms of biological role, antimicrobial peptide. In Xenopus ruwenzoriensis (Uganda clawed frog), this protein is Magainin-R1.